A 195-amino-acid chain; its full sequence is dITP/XTP pyrophosphatase (195 aa).

Position 8–13 (8–13) interacts with substrate; the sequence is TNNQGK. Residues E39 and D68 each coordinate Mg(2+). D68 acts as the Proton acceptor in catalysis. Substrate contacts are provided by residues S69, 149-152, K172, and 177-178; these read FGYD and HR.

It belongs to the HAM1 NTPase family. In terms of assembly, homodimer. It depends on Mg(2+) as a cofactor.

The catalysed reaction is XTP + H2O = XMP + diphosphate + H(+). It carries out the reaction dITP + H2O = dIMP + diphosphate + H(+). It catalyses the reaction ITP + H2O = IMP + diphosphate + H(+). Pyrophosphatase that catalyzes the hydrolysis of nucleoside triphosphates to their monophosphate derivatives, with a high preference for the non-canonical purine nucleotides XTP (xanthosine triphosphate), dITP (deoxyinosine triphosphate) and ITP. Seems to function as a house-cleaning enzyme that removes non-canonical purine nucleotides from the nucleotide pool, thus preventing their incorporation into DNA/RNA and avoiding chromosomal lesions. The sequence is that of dITP/XTP pyrophosphatase from Staphylococcus epidermidis (strain ATCC 35984 / DSM 28319 / BCRC 17069 / CCUG 31568 / BM 3577 / RP62A).